The chain runs to 555 residues: MKSEDVKLGIERAPHRSLLRALGLNTESFQKPFIGIVNSFTEVVPGHIHLRRISEAVKEGINAAGGVGFEFNTIAVCDGIAMNHAGMKYSLPSREIIANTVEIMAMAHAFDGLVFIPNCDKVVPGMLMAACRLNIPSIFVSGGPMLAGRLRKNDQVSCVDLNSVFEAVGQVAKGQMTEEELLELEKVACPGCGSCAGMFTANTMNCLTEALGMALPGNGTIPAVDSRRTQLAKDTGRQILKLIKDNTCPKDIITPDAIYNAFSLDVALGGSTNSVLHVMAVAHEAGADFSLEEINRVSDTTPNLCKLRPSGPYHIENLDQAGGIGSVLKELKPWLKNDARTVSGKTIGQMADAAPKADNKVIRFASNPYSPKGGLAILFGNLAPSGSVVKRSAVAPEMMVHRGPARIFDSEELATKAIMGGKIIPGDVLVIRYEGPKGGPGMREMLTPTSLLAGMGLDKEVALITDGRFSGATRGAAMGHVSPEAAARGPIAALQDGDMINIDIHNYKLSVELSDEEIQKRLANVPAFKPKITSGYLKYYTENVTSASTGAVFKD.

A Mg(2+)-binding site is contributed by D78. C119 contacts [2Fe-2S] cluster. Positions 120 and 121 each coordinate Mg(2+). K121 carries the post-translational modification N6-carboxylysine. C195 contributes to the [2Fe-2S] cluster binding site. E444 is a Mg(2+) binding site. S470 (proton acceptor) is an active-site residue.

The protein belongs to the IlvD/Edd family. In terms of assembly, homodimer. It depends on [2Fe-2S] cluster as a cofactor. Mg(2+) serves as cofactor.

It catalyses the reaction (2R)-2,3-dihydroxy-3-methylbutanoate = 3-methyl-2-oxobutanoate + H2O. It carries out the reaction (2R,3R)-2,3-dihydroxy-3-methylpentanoate = (S)-3-methyl-2-oxopentanoate + H2O. It functions in the pathway amino-acid biosynthesis; L-isoleucine biosynthesis; L-isoleucine from 2-oxobutanoate: step 3/4. Its pathway is amino-acid biosynthesis; L-valine biosynthesis; L-valine from pyruvate: step 3/4. Its function is as follows. Functions in the biosynthesis of branched-chain amino acids. Catalyzes the dehydration of (2R,3R)-2,3-dihydroxy-3-methylpentanoate (2,3-dihydroxy-3-methylvalerate) into 2-oxo-3-methylpentanoate (2-oxo-3-methylvalerate) and of (2R)-2,3-dihydroxy-3-methylbutanoate (2,3-dihydroxyisovalerate) into 2-oxo-3-methylbutanoate (2-oxoisovalerate), the penultimate precursor to L-isoleucine and L-valine, respectively. This is Dihydroxy-acid dehydratase from Dehalococcoides mccartyi (strain ATCC BAA-2266 / KCTC 15142 / 195) (Dehalococcoides ethenogenes (strain 195)).